A 231-amino-acid polypeptide reads, in one-letter code: 4-aminobenzoate synthase (231 aa).

Positions 81, 88, 142, 174, 178, and 181 each coordinate Fe(2+).

It belongs to the CADD family. As to quaternary structure, homodimer. During infection, interacts with death domains of mammalian tumor necrosis factor (TNF) family receptors Fas, DR4, DR5 and to some extent TNFR1, but not with the respective downstream adapters. Fe(2+) is required as a cofactor. The cofactor is Mn(2+).

It localises to the secreted. The protein resides in the host cytoplasm. With respect to regulation, the protein is a cosubstrate rather than a true enzyme and is left in an inactive state after a single turnover. Inactive under anaerobic conditions. In terms of biological role, involved in de novo para-aminobenzoate (PABA) biosynthesis. Acts as a self-sacrificing or 'suicide' enzyme that utilizes its own active site tyrosine residue(s) as the substrate for PABA synthesis. The side chain of the tyrosine residue is released from the protein backbone via cleavage of the C(alpha)-C(beta) bond, leaving a glycine in place of the original tyrosine residue. Reaction requires O(2) and a reduced dimetal cofactor. Was also identified as a specific toxin that associates with death domains of tumor necrosis factor family (TNF) receptors and induces apoptosis in mammalian cell lines through a Caspase-dependent mechanism. This Chlamydia trachomatis serovar D (strain ATCC VR-885 / DSM 19411 / UW-3/Cx) protein is 4-aminobenzoate synthase.